We begin with the raw amino-acid sequence, 431 residues long: O-methyltransferase xanE (431 aa).

Position 283 (D283) interacts with S-adenosyl-L-methionine. The active-site Proton acceptor is the H330.

It belongs to the class I-like SAM-binding methyltransferase superfamily. Cation-independent O-methyltransferase family.

The protein operates within secondary metabolite biosynthesis. Its function is as follows. O-methyltransferase; part of the gene cluster that mediates the biosynthesis of the isocyanide xanthocillin and its derivatives. The first step of the pathway consists in the conversion of tyrosine into a vinyl-isonitrile intermediate by the isocyanide synthase xanB. Subsequent oxidative dimerization of this intermediate to form xanthocillin may involve the cytochrome P450 monooxygenase xanG, whose expression is coregulated with that of XanB. Xanthocillin can be further modified by the isonitrile hydratase-like protein xanA which introduces N-formyl groups and the methyltransferase xanE which introduces methyl groups, leading to the production of several derivatives including fumiformamide. Finally, fumiformamide can be subject to both oxidative and reductive cyclization to yield melanocins E and F, respectively. The chain is O-methyltransferase xanE from Aspergillus fumigatus (strain ATCC MYA-4609 / CBS 101355 / FGSC A1100 / Af293) (Neosartorya fumigata).